The chain runs to 191 residues: Apoptosis regulator BHRF1 (191 aa).

The segment at Met-1–Arg-18 is interaction with host VRK2. Asn-22 carries N-linked (GlcNAc...) asparagine; by host glycosylation. The BH1 signature appears at Glu-89–Met-109. The tract at residues Glu-89 to Gly-142 is interaction with host VRK2. N-linked (GlcNAc...) asparagine; by host glycosylation occurs at Asn-118. Positions Gly-142–Asn-157 match the BH2 motif. Residues Trp-166–Ile-186 form a helical membrane-spanning segment.

The protein belongs to the Bcl-2 family. As to quaternary structure, interacts with isoform 1 of host VRK2; this interaction is involved in protecting cells from apoptosis. Interacts with host PRA1; this interaction seems to modulate BHRF1 anti-apoptotic activity. Interacts with host BCL2L11. Interacts with host BAD and BBC3. Interacts with BALF1; BALF1 acting as a negative regulator of the survival function of BHRF1. Interacts with host BECN1.

The protein resides in the host membrane. The protein localises to the host mitochondrion. Functionally, prevents premature death of the host cell during virus production, which would otherwise reduce the amount of progeny virus. Acts as a host B-cell leukemia/lymphoma 2 (Bcl-2) homolog, and interacts with pro-apoptotic proteins to prevent mitochondria permeabilization, release of cytochrome c and subsequent apoptosis of the host cell. In addition, plays a role in the inhibiton of host BECN1-mediated starvation-induced autophagy without affecting basal levels of autophagy. The polypeptide is Apoptosis regulator BHRF1 (Homo sapiens (Human)).